A 2551-amino-acid polypeptide reads, in one-letter code: Piezo-type mechanosensitive ion channel component (2551 aa).

Helical transmembrane passes span 5-25 (YACM…AALM), 27-47 (PVGI…VPLA), 56-76 (VTAF…GHIT), 106-126 (FIDL…LVFA), 204-226 (IHFE…FAAV), 231-250 (VPGG…WATC), 256-276 (GFAL…LSIV), and 320-340 (LSLD…ALAL). The segment at 354–375 (STRKARTPQPLESGSSVAPSVT) is disordered. A compositionally biased stretch (polar residues) spans 363-375 (PLESGSSVAPSVT). 9 helical membrane-spanning segments follow: residues 395 to 415 (TTTS…GFIY), 424 to 444 (ILMM…LLLS), 463 to 483 (PFIV…GMDL), 516 to 536 (VPLI…RQFF), 548 to 568 (LADF…SYLI), 588 to 608 (LLVR…AITG), 611 to 631 (MTGF…VFQS), 639 to 659 (IMYG…ILIY), and 695 to 715 (FLHL…VHYF). The span at 731-741 (GSAQQKPTETT) shows a compositional bias: polar residues. Positions 731-772 (GSAQQKPTETTALEPAPSKRRGSAGSLRKSQGPSAEAAPGAT) are disordered. 12 consecutive transmembrane segments (helical) span residues 819–839 (IAAF…FVGF), 857–877 (LISF…IEYL), 910–930 (LMSL…HAVI), 973–993 (LNFG…VSTI), 994–1014 (TYRQ…LLLL), 1022–1042 (IWGV…IVLV), 1071–1091 (GALH…LVIL), 1152–1172 (VLCG…TNIA), 1174–1194 (LLAL…SDFY), 1198–1218 (IHTI…NILI), 1239–1259 (WLVH…QIML), and 1275–1295 (ITHQ…IFQL). Disordered stretches follow at residues 1426–1521 (NITE…AKDS) and 1592–1658 (ESDE…PQQQ). Basic and acidic residues predominate over residues 1430 to 1448 (SEMKMQRRKTLYDKSKDAP). A compositionally biased stretch (low complexity) spans 1466–1477 (ATASSSASPAPT). Residues 1497–1511 (QTSKETSDSKSKMEV) show a composition bias toward basic and acidic residues. Low complexity-rich tracts occupy residues 1621 to 1634 (PTST…TTTP) and 1644 to 1658 (LQPL…PQQQ). The next 4 membrane-spanning stretches (helical) occupy residues 1718-1738 (ISSW…VVFI), 1741-1761 (VVNA…WGTL), 1770-1790 (FWVT…IFQF), and 1817-1837 (AHYA…RYLL). Positions 1854 to 1876 (FTKPTASIDERDDSDNLSQPDSR) are disordered. Transmembrane regions (helical) follow at residues 1937-1957 (ALMF…FTAF), 1979-1999 (IPFL…RALY), 2008-2028 (IIFH…VVPA), 2033-2053 (TFNS…YMLL), 2075-2095 (FSMV…LYEL), 2151-2171 (IMGG…LCLF), and 2431-2451 (TFSF…VLLA). The disordered stretch occupies residues 2522-2551 (EYVDDDGDTDSIPSRMSVRRPEQLQPQQPQ).

It belongs to the PIEZO (TC 1.A.75) family.

It localises to the cell membrane. Component of a mechanosensitive channel required for rapidly adapting mechanically activated (MA) currents. Plays a major role in nociception (response to strong or painful touch). Required for maintaining the mechanosensitivity of tarsal bristle mechanosensors. During their evalulation of potential egg-laying sites, females determine the softest substrate for their eggs first by making a coarse evaluation of substrate hardness using mechanosensitive channels nan and Piezo in the leg tarsal bristles, followed by a much finer assessment using nan, iav and Tmc mechanosensitive channels on the labellum. Acts in the nompC- and nan-expressing neurons of the female leg tarsals, to sense the mild differences in egg-laying substrate stiffness. In Drosophila melanogaster (Fruit fly), this protein is Piezo-type mechanosensitive ion channel component.